Reading from the N-terminus, the 344-residue chain is Inositol 2-dehydrogenase/D-chiro-inositol 3-dehydrogenase (344 aa).

Belongs to the Gfo/Idh/MocA family. In terms of assembly, homotetramer.

The catalysed reaction is myo-inositol + NAD(+) = scyllo-inosose + NADH + H(+). The enzyme catalyses 1D-chiro-inositol + NAD(+) = scyllo-inosine + NADH + H(+). It functions in the pathway polyol metabolism; myo-inositol degradation into acetyl-CoA; acetyl-CoA from myo-inositol: step 1/7. Its function is as follows. Involved in the oxidation of myo-inositol (MI) and D-chiro-inositol (DCI) to 2-keto-myo-inositol (2KMI or 2-inosose) and 1-keto-D-chiro-inositol (1KDCI), respectively. The chain is Inositol 2-dehydrogenase/D-chiro-inositol 3-dehydrogenase from Bacillus licheniformis (strain ATCC 14580 / DSM 13 / JCM 2505 / CCUG 7422 / NBRC 12200 / NCIMB 9375 / NCTC 10341 / NRRL NRS-1264 / Gibson 46).